The following is a 376-amino-acid chain: MARVEL domain-containing protein 3 (376 aa).

Positions 1–95 (MKNTSGHREP…EKSRQSRARP (95 aa)) are enriched in basic and acidic residues. Residues 1 to 134 (MKNTSGHREP…GRRGLESERA (134 aa)) are disordered. Over 1–173 (MKNTSGHREP…HKCRYLCTGR (173 aa)) the chain is Cytoplasmic. Residues 168-361 (YLCTGRACWQ…GAVLAFRGYR (194 aa)) form the MARVEL domain. A helical transmembrane segment spans residues 174 to 194 (ACWQMLKALLNLLILACSSVS). Topologically, residues 195–247 (YNSTGGYTGITSLGGIYYYQYGGAYSGFDGADGERAQQLDVQFYQLKLPTVTA) are extracellular. A helical membrane pass occupies residues 248-268 (AMAYSGALMTFSCLTLLAGAL). At 269–275 (RVPWHCP) the chain is on the cytoplasmic side. A helical membrane pass occupies residues 276-296 (LWLVIEGLMDALIAGAYVPGL). The Extracellular segment spans residues 297–335 (YFFFQHLSAAYSSDVCKERETLYQSKGYSGFNCGVHGGD). A helical transmembrane segment spans residues 336-356 (IGAGVFAAMAIGVFAVGAVLA). Topologically, residues 357 to 376 (FRGYRKVKKLKEKPTEMLEF) are cytoplasmic.

Widely expressed with highest levels in small intestine, colon, stomach and lung. Liver expresses only isoform 2.

It localises to the membrane. It is found in the cell junction. Its subcellular location is the tight junction. Functionally, as a component of tight junctions, plays a role in paracellular ion conductivity. This chain is MARVEL domain-containing protein 3 (Marveld3), found in Mus musculus (Mouse).